The primary structure comprises 474 residues: Protein Rv3254 (474 aa).

Positions 1–4 (MTGR) are excised as a propeptide.

This Mycobacterium tuberculosis (strain ATCC 25618 / H37Rv) protein is Protein Rv3254.